A 138-amino-acid chain; its full sequence is Putative pre-16S rRNA nuclease (138 aa).

It belongs to the YqgF nuclease family.

Its subcellular location is the cytoplasm. Functionally, could be a nuclease involved in processing of the 5'-end of pre-16S rRNA. The chain is Putative pre-16S rRNA nuclease from Bacteroides thetaiotaomicron (strain ATCC 29148 / DSM 2079 / JCM 5827 / CCUG 10774 / NCTC 10582 / VPI-5482 / E50).